A 266-amino-acid polypeptide reads, in one-letter code: Uridylate kinase (266 aa).

26–29 is an ATP binding site; that stretch reads KLGG. G67 contacts UMP. Positions 68 and 72 each coordinate ATP. UMP-binding positions include D87 and 148-155; that span reads LGAPYFST. 2 residues coordinate ATP: Y181 and D184.

Belongs to the UMP kinase family. Homohexamer.

Its subcellular location is the cytoplasm. It carries out the reaction UMP + ATP = UDP + ADP. It participates in pyrimidine metabolism; CTP biosynthesis via de novo pathway; UDP from UMP (UMPK route): step 1/1. With respect to regulation, inhibited by UTP. Functionally, catalyzes the reversible phosphorylation of UMP to UDP. In Acidothermus cellulolyticus (strain ATCC 43068 / DSM 8971 / 11B), this protein is Uridylate kinase.